The primary structure comprises 334 residues: G2/mitotic-specific cyclin-1 (334 aa).

Belongs to the cyclin family. Cyclin AB subfamily.

Essential for the control of the cell cycle at the G2/M (mitosis) transition. This chain is G2/mitotic-specific cyclin-1 (CYC1), found in Trypanosoma brucei brucei.